The chain runs to 389 residues: Chalcone synthase A (389 aa).

Cys164 is a catalytic residue.

The protein belongs to the thiolase-like superfamily. Chalcone/stilbene synthases family. In terms of tissue distribution, major expressed member of the gene family in various floral tissues and in seedlings treated with UV light. It is relatively low expressed in tissue culture material.

It carries out the reaction (E)-4-coumaroyl-CoA + 3 malonyl-CoA + 3 H(+) = 2',4,4',6'-tetrahydroxychalcone + 3 CO2 + 4 CoA. The protein operates within secondary metabolite biosynthesis; flavonoid biosynthesis. Functionally, the primary product of this enzyme is 4,2',4',6'-tetrahydroxychalcone (also termed naringenin-chalcone or chalcone) which can under specific conditions spontaneously isomerize into naringenin. In Petunia hybrida (Petunia), this protein is Chalcone synthase A (CHSA).